An 893-amino-acid polypeptide reads, in one-letter code: Dystroglycan 1 (893 aa).

The N-terminal stretch at 1–27 (MSVDNWLLHPLWGQTFLLLLSVAVAQA) is a signal peptide. Residues 28–406 (HWPSEPSEAV…GQIRPTLTIP (379 aa)) are required for laminin recognition. The tract at residues 47–69 (SMHSVLSDFQEAVPTVVGIPDGT) is O-glycosylated at one site. Asn139 is a glycosylation site (N-linked (GlcNAc...) asparagine). Cys180 and Cys262 are joined by a disulfide. The mucin-like domain stretch occupies residues 314–483 (ATPTPVTAIG…PPTRIRTTTS (170 aa)). 3 O-linked (Man6P...) threonine glycosylation sites follow: Thr315, Thr317, and Thr377. Positions 379–498 (TLGPIQPTRV…GEPNQRPELK (120 aa)) are disordered. Residues 409 to 445 (VEPTAVITPPTTTTKKPRVSTPKPATPSTDSSTTTTR) show a composition bias toward low complexity. An O-glycosylated at seven sites with GalNAc region spans residues 461 to 483 (TTKAPITRLETASPPTRIRTTTS). The 110-residue stretch at 601–710 (KAPARFKARL…LSIAVTGSGS (110 aa)) folds into the Peptidase S72 domain. N-linked (GlcNAc...) asparagine glycans are attached at residues Asn639, Asn647, and Asn659. Residues 652 to 751 (SIVVEWTNNT…SSEDDVYLHT (100 aa)) are Extracellular-facing. Cysteines 667 and 711 form a disulfide. Residues 722–744 (PSPGSSAAPATEVPDRDPEKSSE) are disordered. A compositionally biased stretch (basic and acidic residues) spans 734 to 744 (VPDRDPEKSSE). Residues 752-772 (VIPAVVVAAILLIAGIIAMIC) form a helical membrane-spanning segment. At 773–893 (YRKKRKGKLT…YRSPPPYVPP (121 aa)) the chain is on the cytoplasmic side. A Nuclear localization signal motif is present at residues 774–780 (RKKRKGK). Thr788 is subject to Phosphothreonine. The segment at 817 to 893 (LQEEKAPLPP…YRSPPPYVPP (77 aa)) is required for interaction with CAV3. The tract at residues 821 to 893 (KAPLPPPEYP…YRSPPPYVPP (73 aa)) is disordered. The span at 830 to 844 (PNQSMPETTPLNQDT) shows a compositional bias: polar residues. The span at 857–868 (NAPPYQPPPPFT) shows a compositional bias: pro residues. The interval 878-893 (PKNMTPYRSPPPYVPP) is required for binding DMD and UTRN. The PPXY motif signature appears at 887-890 (PPPY). Residue Tyr890 is modified to Phosphotyrosine; by SRC.

In terms of assembly, monomer. Heterodimer of alpha- and beta-dystroglycan subunits which are the central components of the dystrophin-glycoprotein complex. This complex then can form a dystrophin-associated glycoprotein complex (DGC) which is composed of three subcomplexes: a cytoplasmic complex comprised of DMD (or UTRN), DTNA and a number of syntrophins, such as SNTB1, SNTB2, SNTG1 and SNTG2, the transmembrane dystroglycan complex, and the sarcoglycan-sarcospan complex. Interacts (via the N-terminal of alphaDAG1) with LARGE1; the interaction enhances laminin binding. Interacts with SGCD. Interacts with AGR2 and AGR3. Interacts (betaDAG1) with DMD; the interaction is inhibited by phosphorylation on the PPXY motif. Interacts (betaDAG1, via its PPXY motif) with UTRN (via its WWW and ZZ domains); the interaction is inhibited by phosphorylation on the PPXY motif. Interacts (betaDAG1, via its phosphorylated PPXY motif) with the SH2 domain-containing proteins, FYN, CSK, NCK and SHC. Interacts (betaDAG1) with CAV3 (via a central WW-like domain); the interaction disrupts the binding of DMD. BetaDAG1 directly interacts with ANK3, but not with ANK2; this interaction does not interfere with DMD-binding and is required for retention at costameres. Identified in a dystroglycan complex that contains at least PRX, DRP2, UTRN, DMD and DAG1. Interacts with POMGNT1. BetaDAG1 interacts with CD93. O-glycosylated. POMGNT1 catalyzes the initial addition of N-acetylglucosamine, giving rise to the GlcNAc(beta1-2)Man(alpha1-)O-Ser/Thr moiety and thus providing the necessary basis for the addition of further carbohydrate moieties. Heavily O-glycosylated comprising of up to two thirds of its mass and the carbohydrate composition differs depending on tissue type. Mucin-type O-glycosylation is important for ligand binding activity. O-mannosylation is found in high abundance in both brain and muscle where the most abundant glycan is Sia-alpha-2-3-Gal-beta-1-4-Glc-NAc-beta-1-2-Man. In muscle, glycosylation on Thr-315, Thr-317, Thr-379 by a phosphorylated O-mannosyl glycan with the structure 2-(N-acetylamido)-2-deoxygalactosyl-beta-1,3-2-(N-acetylamido)-2-deoxyglucosyl-beta-1,4-6-phosphomannose is mediated by like-acetylglucosaminyltransferase (LARGE1) protein amd is required for laminin binding. O-glycosylated in the N-terminal region with a core 1 or possibly core 8 glycan. The brain form displays a unique glycosylation pattern which is absent in other tissues; this form shows enhanced binding to laminin LAMA5 compared to the skeletal muscle form. In terms of processing, N-glycosylated. Post-translationally, autolytic cleavage produces the alpha and beta subunits. In cutaneous cells, as well as in certain pathological conditions, shedding of beta-dystroglycan can occur releasing a peptide of about 30 kDa. SRC-mediated phosphorylation of the PPXY motif of the beta subunit recruits SH2 domain-containing proteins, but inhibits binding to WWW domain-containing proteins, DMD and UTRN. This phosphorylation also inhibits nuclear entry. In terms of tissue distribution, detected in brain and kidney (at protein level). Detected in sciatic nerve (at protein level). Expressed in neurons and muscle cells (at protein level). Expressed in a variety of tissues. In brain, expressed in the hippocampal formation, the olfactory bulb, the cerebellum and the thalamus. In the peripheral nerve system, expressed in Schwann cells.

The protein localises to the secreted. It is found in the extracellular space. Its subcellular location is the cell membrane. The protein resides in the cytoplasm. It localises to the cytoskeleton. The protein localises to the nucleus. It is found in the nucleoplasm. Its subcellular location is the sarcolemma. The protein resides in the postsynaptic cell membrane. Its function is as follows. The dystroglycan complex is involved in a number of processes including laminin and basement membrane assembly, sarcolemmal stability, cell survival, peripheral nerve myelination, nodal structure, cell migration, and epithelial polarization. Functionally, extracellular peripheral glycoprotein that acts as a receptor for extracellular matrix proteins containing laminin-G domains, and for certain adenoviruses. Receptor for laminin-2 (LAMA2) and agrin in peripheral nerve Schwann cells. Also acts as a receptor for laminin LAMA5. Transmembrane protein that plays important roles in connecting the extracellular matrix to the cytoskeleton. Acts as a cell adhesion receptor in both muscle and non-muscle tissues. Receptor for both DMD and UTRN and, through these interactions, scaffolds axin to the cytoskeleton. Also functions in cell adhesion-mediated signaling and implicated in cell polarity. The chain is Dystroglycan 1 from Mus musculus (Mouse).